A 2035-amino-acid polypeptide reads, in one-letter code: Ral GTPase-activating protein subunit alpha-1 (2035 aa).

Residues 343–384 (LVSREESKNDTVDKADKTAEPEQSHSNTSTLTEREPSSSSLC) are disordered. The span at 345–365 (SREESKNDTVDKADKTAEPEQ) shows a compositional bias: basic and acidic residues. The span at 366-384 (SHSNTSTLTEREPSSSSLC) shows a compositional bias: polar residues. A phosphoserine mark is found at Ser710 and Ser720. Residues 714–754 (SFSRGWSRDQPGQAPMRQRSATTTGSPGTEKARSIVRQKTV) are disordered. Thr753 is modified (phosphothreonine). Ser772 bears the Phosphoserine mark. Position 777 is a phosphothreonine (Thr777). Ser796 bears the Phosphoserine mark. The span at 807-817 (ERAKVNKEDTS) shows a compositional bias: basic and acidic residues. 2 disordered regions span residues 807–834 (ERAK…SANV) and 848–911 (SGNA…SHSD). Composition is skewed to polar residues over residues 824-833 (NSETGGSSAN) and 849-862 (GNAS…SSPG). Phosphoserine is present on residues Ser859, Ser860, and Ser863. Residues 894–911 (SPASAGSSDLMSSDSHSD) are compositionally biased toward low complexity. Phosphoserine is present on residues Ser985, Ser989, Ser993, and Ser999. Residues 986–1008 (ESASPVHSALGSRSQTPSPSTLN) form a disordered region. Thr1001 carries the post-translational modification Phosphothreonine. Residues Ser1003 and Ser1477 each carry the phosphoserine modification. The segment at 1326-2034 (FTNKTVAHVA…PYHHFPADAD (709 aa)) is minimal domain that binds to TCF3/E12. Positions 1713-1746 (SEKQENDVINAILKQYTEEKEFVEKHFNDLNMKA) form a coiled coil. Residues 1795–2003 (LRNLDSRQCR…EERARYLQTI (209 aa)) enclose the Rap-GAP domain.

As to quaternary structure, component of the heterodimeric RalGAP1 complex with RALGAPB. Heterodimerization is required for activity. Interacts with the HLH region of TCF3/isoform E12. In terms of tissue distribution, highly expressed in brain, thymus and testis with lower levels in lung and spleen and barely detectable in heart or liver (at protein level).

It localises to the cytoplasm. The protein resides in the nucleus. Catalytic subunit of the heterodimeric RalGAP1 complex which acts as a GTPase activator for the Ras-like small GTPases RALA and RALB. The sequence is that of Ral GTPase-activating protein subunit alpha-1 (Ralgapa1) from Rattus norvegicus (Rat).